The primary structure comprises 99 residues: Nucleoid-associated protein LL0120 (99 aa).

This sequence belongs to the YbaB/EbfC family. As to quaternary structure, homodimer.

It is found in the cytoplasm. Its subcellular location is the nucleoid. Binds to DNA and alters its conformation. May be involved in regulation of gene expression, nucleoid organization and DNA protection. The chain is Nucleoid-associated protein LL0120 (ybcG) from Lactococcus lactis subsp. lactis (strain IL1403) (Streptococcus lactis).